A 637-amino-acid polypeptide reads, in one-letter code: Nuclear receptor subfamily 2 group C member 1-B (637 aa).

A DNA-binding region (nuclear receptor) is located at residues 149-224 (VELCVVCGDK…LGMKQDSVQC (76 aa)). 2 consecutive NR C4-type zinc fingers follow at residues 152-172 (CVVCGDKASGRHYGAVTCEGC) and 188-207 (CRGSKDCVINKHYRNRCQYC). Residues 383-624 (CVGSGSNLLP…SIIPYILRME (242 aa)) enclose the NR LBD domain.

This sequence belongs to the nuclear hormone receptor family. NR2 subfamily.

The protein resides in the nucleus. Functionally, orphan nuclear receptor. Binds the IR7 element in the promoter of its own gene in an autoregulatory negative feedback mechanism. Primarily repressor of a broad range of genes. Binds to hormone response elements (HREs) consisting of two 5'-AGGTCA-3' half site direct repeat consensus sequences. The chain is Nuclear receptor subfamily 2 group C member 1-B (nr2c1-b) from Xenopus laevis (African clawed frog).